Reading from the N-terminus, the 437-residue chain is Xylose isomerase (437 aa).

Residues histidine 101 and aspartate 104 contribute to the active site. Mg(2+)-binding residues include glutamate 232, glutamate 268, histidine 271, aspartate 296, aspartate 307, aspartate 309, and aspartate 339.

Belongs to the xylose isomerase family. As to quaternary structure, homotetramer. It depends on Mg(2+) as a cofactor.

The protein resides in the cytoplasm. It carries out the reaction alpha-D-xylose = alpha-D-xylulofuranose. This is Xylose isomerase from Mannheimia succiniciproducens (strain KCTC 0769BP / MBEL55E).